A 377-amino-acid chain; its full sequence is Chorismate synthase (377 aa).

The NADP(+) site is built by R48 and R54. FMN is bound by residues 125 to 127 (RSS), 238 to 239 (NA), G278, 293 to 297 (KPTSS), and R319.

It belongs to the chorismate synthase family. As to quaternary structure, homotetramer. Requires FMNH2 as cofactor.

It carries out the reaction 5-O-(1-carboxyvinyl)-3-phosphoshikimate = chorismate + phosphate. It participates in metabolic intermediate biosynthesis; chorismate biosynthesis; chorismate from D-erythrose 4-phosphate and phosphoenolpyruvate: step 7/7. Functionally, catalyzes the anti-1,4-elimination of the C-3 phosphate and the C-6 proR hydrogen from 5-enolpyruvylshikimate-3-phosphate (EPSP) to yield chorismate, which is the branch point compound that serves as the starting substrate for the three terminal pathways of aromatic amino acid biosynthesis. This reaction introduces a second double bond into the aromatic ring system. The polypeptide is Chorismate synthase (Aromatoleum aromaticum (strain DSM 19018 / LMG 30748 / EbN1) (Azoarcus sp. (strain EbN1))).